Here is a 449-residue protein sequence, read N- to C-terminus: Tubulin alpha chain (449 aa).

Q11 contributes to the GTP binding site. The residue at position 40 (K40) is an N6-acetyllysine. 7 residues coordinate GTP: E71, S140, G144, T145, T179, N206, and N228. Residue E71 coordinates Mg(2+). E254 is an active-site residue.

This sequence belongs to the tubulin family. Dimer of alpha and beta chains. A typical microtubule is a hollow water-filled tube with an outer diameter of 25 nm and an inner diameter of 15 nM. Alpha-beta heterodimers associate head-to-tail to form protofilaments running lengthwise along the microtubule wall with the beta-tubulin subunit facing the microtubule plus end conferring a structural polarity. Microtubules usually have 13 protofilaments but different protofilament numbers can be found in some organisms and specialized cells. It depends on Mg(2+) as a cofactor. In terms of processing, undergoes a tyrosination/detyrosination cycle, the cyclic removal and re-addition of a C-terminal tyrosine residue by the enzymes tubulin tyrosine carboxypeptidase (TTCP) and tubulin tyrosine ligase (TTL), respectively. Post-translationally, acetylation of alpha chains at Lys-40 stabilizes microtubules and affects affinity and processivity of microtubule motors. This modification has a role in multiple cellular functions, ranging from cell motility, cell cycle progression or cell differentiation to intracellular trafficking and signaling.

It localises to the cytoplasm. The protein localises to the cytoskeleton. The catalysed reaction is GTP + H2O = GDP + phosphate + H(+). Functionally, tubulin is the major constituent of microtubules, a cylinder consisting of laterally associated linear protofilaments composed of alpha- and beta-tubulin heterodimers. Microtubules grow by the addition of GTP-tubulin dimers to the microtubule end, where a stabilizing cap forms. Below the cap, tubulin dimers are in GDP-bound state, owing to GTPase activity of alpha-tubulin. The chain is Tubulin alpha chain from Tetrahymena pyriformis.